A 102-amino-acid polypeptide reads, in one-letter code: Citrate lyase acyl carrier protein (102 aa).

Ser-14 carries the post-translational modification O-(phosphoribosyl dephospho-coenzyme A)serine.

The protein belongs to the CitD family. As to quaternary structure, oligomer with a subunit composition of (alpha,beta,gamma)6.

The protein localises to the cytoplasm. Its function is as follows. Covalent carrier of the coenzyme of citrate lyase. The protein is Citrate lyase acyl carrier protein of Streptococcus equi subsp. zooepidemicus (strain MGCS10565).